The following is a 227-amino-acid chain: Ribonuclease 3 (227 aa).

The RNase III domain maps to 5–127; that stretch reads YQKLSRRIGY…IIGAMYLDAG (123 aa). Residue Glu-40 participates in Mg(2+) binding. The active site involves Asp-44. Asp-113 and Glu-116 together coordinate Mg(2+). The active site involves Glu-116. Residues 154–224 form the DRBM domain; the sequence is DAKTRLQEFL…AAKALKKLEK (71 aa).

The protein belongs to the ribonuclease III family. As to quaternary structure, homodimer. It depends on Mg(2+) as a cofactor.

It localises to the cytoplasm. The catalysed reaction is Endonucleolytic cleavage to 5'-phosphomonoester.. Digests double-stranded RNA. Involved in the processing of primary rRNA transcript to yield the immediate precursors to the large and small rRNAs (23S and 16S). Processes some mRNAs, and tRNAs when they are encoded in the rRNA operon. Processes pre-crRNA and tracrRNA of type II CRISPR loci if present in the organism. The sequence is that of Ribonuclease 3 from Marinomonas sp. (strain MWYL1).